A 103-amino-acid polypeptide reads, in one-letter code: Large ribosomal subunit protein uL24 (103 aa).

Belongs to the universal ribosomal protein uL24 family. As to quaternary structure, part of the 50S ribosomal subunit.

In terms of biological role, one of two assembly initiator proteins, it binds directly to the 5'-end of the 23S rRNA, where it nucleates assembly of the 50S subunit. Functionally, one of the proteins that surrounds the polypeptide exit tunnel on the outside of the subunit. This chain is Large ribosomal subunit protein uL24, found in Glaesserella parasuis serovar 5 (strain SH0165) (Haemophilus parasuis).